A 367-amino-acid polypeptide reads, in one-letter code: Methylthioribose-1-phosphate isomerase (367 aa).

Residue D250 is the Proton donor of the active site.

The protein belongs to the eIF-2B alpha/beta/delta subunits family. MtnA subfamily.

The protein resides in the cytoplasm. It localises to the nucleus. It carries out the reaction 5-(methylsulfanyl)-alpha-D-ribose 1-phosphate = 5-(methylsulfanyl)-D-ribulose 1-phosphate. The protein operates within amino-acid biosynthesis; L-methionine biosynthesis via salvage pathway; L-methionine from S-methyl-5-thio-alpha-D-ribose 1-phosphate: step 1/6. In terms of biological role, catalyzes the interconversion of methylthioribose-1-phosphate (MTR-1-P) into methylthioribulose-1-phosphate (MTRu-1-P). This is Methylthioribose-1-phosphate isomerase (IDI2) from Hordeum vulgare (Barley).